A 505-amino-acid polypeptide reads, in one-letter code: Probable alpha-L-arabinofuranosidase C (505 aa).

Residues asparagine 81, asparagine 152, asparagine 269, and asparagine 438 are each glycosylated (N-linked (GlcNAc...) asparagine).

It belongs to the glycosyl hydrolase 51 family.

The protein localises to the secreted. It catalyses the reaction Hydrolysis of terminal non-reducing alpha-L-arabinofuranoside residues in alpha-L-arabinosides.. It functions in the pathway glycan metabolism; L-arabinan degradation. Alpha-L-arabinofuranosidase involved in the degradation of arabinoxylan, a major component of plant hemicellulose. Acts only on small linear 1,5-alpha-linked L-arabinofuranosyl oligosaccharides. This chain is Probable alpha-L-arabinofuranosidase C (abfC), found in Aspergillus fumigatus (strain ATCC MYA-4609 / CBS 101355 / FGSC A1100 / Af293) (Neosartorya fumigata).